Reading from the N-terminus, the 101-residue chain is Protein SSXA1 (101 aa).

Residues 19-83 (ETCQAFEDIS…ERVTKSVLSD (65 aa)) form the KRAB-related domain. The disordered stretch occupies residues 73-101 (KERVTKSVLSDSDEVSSHESQDKRKNPVV). Over residues 87-101 (VSSHESQDKRKNPVV) the composition is skewed to basic and acidic residues.

The protein belongs to the SSX family. Specifically expressed in testis (at protein level). Not detected in other tissues tested (at protein level).

It localises to the nucleus. Its function is as follows. Could act as a modulator of transcription. The polypeptide is Protein SSXA1 (Mus musculus (Mouse)).